Here is a 226-residue protein sequence, read N- to C-terminus: Ribosomal RNA large subunit methyltransferase E (226 aa).

5 residues coordinate S-adenosyl-L-methionine: G82, W84, D100, D116, and D140. K180 functions as the Proton acceptor in the catalytic mechanism.

The protein belongs to the class I-like SAM-binding methyltransferase superfamily. RNA methyltransferase RlmE family.

It localises to the cytoplasm. The catalysed reaction is uridine(2552) in 23S rRNA + S-adenosyl-L-methionine = 2'-O-methyluridine(2552) in 23S rRNA + S-adenosyl-L-homocysteine + H(+). Specifically methylates the uridine in position 2552 of 23S rRNA at the 2'-O position of the ribose in the fully assembled 50S ribosomal subunit. This is Ribosomal RNA large subunit methyltransferase E from Caulobacter sp. (strain K31).